A 424-amino-acid chain; its full sequence is Serine/threonine-protein kinase H1 (424 aa).

A lipid anchor (N-myristoyl glycine) is attached at G2. A lipid anchor (S-palmitoyl cysteine) is attached at C3. The segment at 49–81 (KGGFPAASQGANPSPGTPRTSHTEPPSEPPRRA) is disordered. The segment covering 57-72 (QGANPSPGTPRTSHTE) has biased composition (polar residues). The 258-residue stretch at 98–355 (YDIKALIGRG…ALQALRHPWV (258 aa)) folds into the Protein kinase domain. ATP is bound by residues 104–112 (IGRGSFSRV) and K127. D218 serves as the catalytic Proton acceptor. The segment at 378–407 (RASSRCQSTKSAQSTRSSRSTRSNKSRRVR) is disordered. Phosphoserine; by autocatalysis occurs at positions 380 and 381. Residues 385–398 (STKSAQSTRSSRST) are compositionally biased toward low complexity.

Belongs to the protein kinase superfamily. CAMK Ser/Thr protein kinase family. In terms of assembly, homodimer. Post-translationally, autophosphorylated on serine residues. In terms of processing, myristoylated. Required for membrane association. Prerequisite for palmitoylation to occur. Palmitoylated.

It is found in the golgi apparatus. Its subcellular location is the cytoplasm. The protein localises to the cytoskeleton. The protein resides in the microtubule organizing center. It localises to the centrosome. It is found in the nucleus speckle. Its subcellular location is the endoplasmic reticulum membrane. The protein localises to the cell membrane. It catalyses the reaction L-seryl-[protein] + ATP = O-phospho-L-seryl-[protein] + ADP + H(+). The enzyme catalyses L-threonyl-[protein] + ATP = O-phospho-L-threonyl-[protein] + ADP + H(+). Activity depends on Ca(2+) concentration. Its function is as follows. May be a SFC-associated serine kinase (splicing factor compartment-associated serine kinase) with a role in intranuclear SR protein (non-snRNP splicing factors containing a serine/arginine-rich domain) trafficking and pre-mRNA processing. The chain is Serine/threonine-protein kinase H1 (PSKH1) from Bos taurus (Bovine).